A 291-amino-acid chain; its full sequence is MKKIDSWLTKHGLKNRLTLVVIVIFIIFLILLFMFVNLSDEDTGQITITENAELRTGPNAAYPVIYKIEKGESFKKIDRKGKWIEVQNHAGTEKGWVAGWHTNLNIPADQSLSSNPLKGKTIVLDPGHGGSDQGASSSTPSKSLEKNYTLKTAKELKKLLNKEGAHVKMTRSNDKYVSLDDRNIKGDAFISIHNDALDSSNANGVTVYWFKDKQESLAQTLNSAIQKKALLTNRGSRQQNYQVLRQTDIPAVLLELGYISNPTDESMINDQLHRQVVEQAIVDGLKQYFSS.

A signal peptide spans 1–40; it reads MKKIDSWLTKHGLKNRLTLVVIVIFIIFLILLFMFVNLSD. The SH3b domain maps to 41 to 105; the sequence is EDTGQITITE…WVAGWHTNLN (65 aa). The MurNAc-LAA domain occupies 122–286; that stretch reads IVLDPGHGGS…VEQAIVDGLK (165 aa). The segment at 123–147 is disordered; sequence VLDPGHGGSDQGASSSTPSKSLEKN. The span at 133–142 shows a compositional bias: polar residues; sequence QGASSSTPSK.

Belongs to the N-acetylmuramoyl-L-alanine amidase 3 family.

The protein resides in the secreted. Its function is as follows. Probably involved in cell-wall metabolism. The sequence is that of Probable cell wall amidase LytH (lytH) from Staphylococcus epidermidis (strain ATCC 12228 / FDA PCI 1200).